Consider the following 456-residue polypeptide: Bifunctional protein GlmU (456 aa).

Positions 1-229 (MTKKALSAVI…VMEVEGANNR (229 aa)) are pyrophosphorylase. Residues 11 to 14 (LAAG), K25, Q76, 81 to 82 (GT), 103 to 105 (YGD), G140, E154, N169, and N227 each bind UDP-N-acetyl-alpha-D-glucosamine. Mg(2+) is bound at residue D105. Residue N227 coordinates Mg(2+). The linker stretch occupies residues 230–250 (LQLAALERYLQNKQASKLLLE). The segment at 251–456 (GVMIYDPARF…QGWQRPIKKK (206 aa)) is N-acetyltransferase. 2 residues coordinate UDP-N-acetyl-alpha-D-glucosamine: R333 and K351. H363 serves as the catalytic Proton acceptor. Positions 366 and 377 each coordinate UDP-N-acetyl-alpha-D-glucosamine. Acetyl-CoA contacts are provided by residues A380, 386 to 387 (NY), S405, A423, and R440.

The protein in the N-terminal section; belongs to the N-acetylglucosamine-1-phosphate uridyltransferase family. It in the C-terminal section; belongs to the transferase hexapeptide repeat family. In terms of assembly, homotrimer. Mg(2+) is required as a cofactor.

Its subcellular location is the cytoplasm. The catalysed reaction is alpha-D-glucosamine 1-phosphate + acetyl-CoA = N-acetyl-alpha-D-glucosamine 1-phosphate + CoA + H(+). It carries out the reaction N-acetyl-alpha-D-glucosamine 1-phosphate + UTP + H(+) = UDP-N-acetyl-alpha-D-glucosamine + diphosphate. The protein operates within nucleotide-sugar biosynthesis; UDP-N-acetyl-alpha-D-glucosamine biosynthesis; N-acetyl-alpha-D-glucosamine 1-phosphate from alpha-D-glucosamine 6-phosphate (route II): step 2/2. It functions in the pathway nucleotide-sugar biosynthesis; UDP-N-acetyl-alpha-D-glucosamine biosynthesis; UDP-N-acetyl-alpha-D-glucosamine from N-acetyl-alpha-D-glucosamine 1-phosphate: step 1/1. Its pathway is bacterial outer membrane biogenesis; LPS lipid A biosynthesis. Functionally, catalyzes the last two sequential reactions in the de novo biosynthetic pathway for UDP-N-acetylglucosamine (UDP-GlcNAc). The C-terminal domain catalyzes the transfer of acetyl group from acetyl coenzyme A to glucosamine-1-phosphate (GlcN-1-P) to produce N-acetylglucosamine-1-phosphate (GlcNAc-1-P), which is converted into UDP-GlcNAc by the transfer of uridine 5-monophosphate (from uridine 5-triphosphate), a reaction catalyzed by the N-terminal domain. The protein is Bifunctional protein GlmU of Haemophilus influenzae (strain PittEE).